Consider the following 379-residue polypeptide: Chaperone protein DnaJ (379 aa).

A J domain is found at 5-69; sequence EYYERLGVDK…QKRAAYDQYG (65 aa). The CR-type zinc finger occupies 141–223; it reads GVEKQVKYNR…CHGSGHEKVA (83 aa). Zn(2+) is bound by residues cysteine 154, cysteine 157, cysteine 171, cysteine 174, cysteine 197, cysteine 200, cysteine 211, and cysteine 214. 4 CXXCXGXG motif repeats span residues 154–161, 171–178, 197–204, and 211–218; these read CHTCGGSG, CHKCGGRG, CDVCNGTG, and CETCHGSG.

This sequence belongs to the DnaJ family. In terms of assembly, homodimer. Zn(2+) is required as a cofactor.

The protein localises to the cytoplasm. Functionally, participates actively in the response to hyperosmotic and heat shock by preventing the aggregation of stress-denatured proteins and by disaggregating proteins, also in an autonomous, DnaK-independent fashion. Unfolded proteins bind initially to DnaJ; upon interaction with the DnaJ-bound protein, DnaK hydrolyzes its bound ATP, resulting in the formation of a stable complex. GrpE releases ADP from DnaK; ATP binding to DnaK triggers the release of the substrate protein, thus completing the reaction cycle. Several rounds of ATP-dependent interactions between DnaJ, DnaK and GrpE are required for fully efficient folding. Also involved, together with DnaK and GrpE, in the DNA replication of plasmids through activation of initiation proteins. The sequence is that of Chaperone protein DnaJ from Lactococcus lactis subsp. lactis (strain IL1403) (Streptococcus lactis).